A 150-amino-acid polypeptide reads, in one-letter code: Urease accessory protein UreE (150 aa).

It belongs to the UreE family.

The protein resides in the cytoplasm. Involved in urease metallocenter assembly. Binds nickel. Probably functions as a nickel donor during metallocenter assembly. This Staphylococcus epidermidis (strain ATCC 35984 / DSM 28319 / BCRC 17069 / CCUG 31568 / BM 3577 / RP62A) protein is Urease accessory protein UreE.